A 1109-amino-acid chain; its full sequence is Coiled-coil domain-containing protein 158 (1109 aa).

Positions 1–12 (MESKACESKNED) are enriched in basic and acidic residues. Positions 1–31 (MESKACESKNEDLLPSGITSKGGSSSPFFVT) are disordered. Polar residues predominate over residues 17–31 (GITSKGGSSSPFFVT). Coiled coils occupy residues 71 to 166 (GKEH…MLKD) and 242 to 828 (VEDQ…QEQE). Disordered stretches follow at residues 843-897 (LQGP…DPTR) and 952-1061 (HRSN…TGKT). 3 stretches are compositionally biased toward polar residues: residues 862 to 882 (ASVTRSHSNIPSSQSTTSFLS), 953 to 970 (RSNNSLRESTEGSKSSET), and 988 to 998 (SCFTFTSTASP). Residues 999–1019 (SGKMSASRSFSSSPKKSPVHS) show a composition bias toward low complexity. Composition is skewed to polar residues over residues 1020–1037 (LLTSSAEESVNSTPQYRS) and 1043–1061 (SPTSAKDSQSPSLETTGKT). A coiled-coil region spans residues 1053–1109 (PSLETTGKTCQKLQNRLESLQTLVEDLQLKNQAMSSMIRNQEKRIQKVKDQEKMLLK).

This Mus musculus (Mouse) protein is Coiled-coil domain-containing protein 158 (Ccdc158).